The following is a 262-amino-acid chain: Putative glycyl-radical enzyme activating enzyme HI_0520 (262 aa).

In terms of domain architecture, Radical SAM core spans 20–262 (VEGQGNRSSI…CGINKILTIL (243 aa)). Cysteine 34, cysteine 38, and cysteine 41 together coordinate [4Fe-4S] cluster. Residues 40–42 (YCH), glycine 81, and 130–132 (DLK) contribute to the S-adenosyl-L-methionine site.

This sequence belongs to the organic radical-activating enzymes family. The cofactor is [4Fe-4S] cluster.

It carries out the reaction glycyl-[protein] + reduced [flavodoxin] + S-adenosyl-L-methionine = glycin-2-yl radical-[protein] + semiquinone [flavodoxin] + 5'-deoxyadenosine + L-methionine + H(+). The polypeptide is Putative glycyl-radical enzyme activating enzyme HI_0520 (Haemophilus influenzae (strain ATCC 51907 / DSM 11121 / KW20 / Rd)).